We begin with the raw amino-acid sequence, 656 residues long: Threonine--tRNA ligase (656 aa).

Residues 1-64 (MAEAASLTFP…ERSGKIEIIT (64 aa)) enclose the TGS domain. Positions 246–548 (DHRRLGREMD…LIENYAGHFP (303 aa)) are catalytic. The Zn(2+) site is built by cysteine 342, histidine 393, and histidine 525.

It belongs to the class-II aminoacyl-tRNA synthetase family. Homodimer. Zn(2+) serves as cofactor.

It is found in the cytoplasm. It catalyses the reaction tRNA(Thr) + L-threonine + ATP = L-threonyl-tRNA(Thr) + AMP + diphosphate + H(+). Catalyzes the attachment of threonine to tRNA(Thr) in a two-step reaction: L-threonine is first activated by ATP to form Thr-AMP and then transferred to the acceptor end of tRNA(Thr). Also edits incorrectly charged L-seryl-tRNA(Thr). This chain is Threonine--tRNA ligase, found in Chelativorans sp. (strain BNC1).